The primary structure comprises 165 residues: Protein SprT (165 aa).

The 142-residue stretch at 22–163 (LAQANLKLDR…RCVHCGEPLV (142 aa)) folds into the SprT-like domain. Residue histidine 78 coordinates Zn(2+). Residue glutamate 79 is part of the active site. Histidine 82 is a Zn(2+) binding site.

Belongs to the SprT family. Zn(2+) serves as cofactor.

It is found in the cytoplasm. The sequence is that of Protein SprT from Salmonella paratyphi A (strain ATCC 9150 / SARB42).